The following is a 485-amino-acid chain: Aldehyde dehydrogenase family 3 member A2 (485 aa).

At 1-463 (MELEVRRVRQ…FLLKRFNKEK (463 aa)) the chain is on the cytoplasmic side. An NAD(+)-binding site is contributed by 185 to 190 (GNTAVG). Catalysis depends on residues Glu207 and Cys241. Ser293 carries the post-translational modification Phosphoserine. A helical membrane pass occupies residues 464 to 484 (LGLLLLTFLGIVAAVLVKAEY). A Prevents secretion from ER motif is present at residues 481–484 (KAEY).

Belongs to the aldehyde dehydrogenase family. Homodimer.

Its subcellular location is the microsome membrane. It localises to the endoplasmic reticulum membrane. The enzyme catalyses an aldehyde + NAD(+) + H2O = a carboxylate + NADH + 2 H(+). It carries out the reaction a fatty aldehyde + NAD(+) + H2O = a fatty acid + NADH + 2 H(+). The catalysed reaction is (2E)-hexadecenal + NAD(+) + H2O = (E)-hexadec-2-enoate + NADH + 2 H(+). It catalyses the reaction hexadecanoate + NADH + 2 H(+) = hexadecanal + NAD(+) + H2O. The enzyme catalyses 22-oxodocosanoate + NAD(+) + H2O = docosanedioate + NADH + 2 H(+). It carries out the reaction 2,6,10,14-tetramethylpentadecanal + NAD(+) + H2O = 2,6,10,14-tetramethylpentadecanoate + NADH + 2 H(+). The catalysed reaction is octadecanal + NAD(+) + H2O = octadecanoate + NADH + 2 H(+). It catalyses the reaction dodecanoate + NADH + 2 H(+) = dodecanal + NAD(+) + H2O. The enzyme catalyses decanal + NAD(+) + H2O = decanoate + NADH + 2 H(+). It carries out the reaction tetradecanal + NAD(+) + H2O = tetradecanoate + NADH + 2 H(+). The catalysed reaction is octanal + NAD(+) + H2O = octanoate + NADH + 2 H(+). It catalyses the reaction heptanal + NAD(+) + H2O = heptanoate + NADH + 2 H(+). The enzyme catalyses (2E,6E)-farnesal + NAD(+) + H2O = (2E,6E)-farnesoate + NADH + 2 H(+). Functionally, catalyzes the oxidation of medium and long-chain aliphatic aldehydes to fatty acids. Active on a variety of saturated and unsaturated aliphatic aldehydes between 6 and 24 carbons in length. Responsible for conversion of the sphingosine 1-phosphate (S1P) degradation product hexadecenal to hexadecenoic acid. In Pongo abelii (Sumatran orangutan), this protein is Aldehyde dehydrogenase family 3 member A2 (ALDH3A2).